We begin with the raw amino-acid sequence, 38 residues long: Lebetin-2-alpha (38 aa).

A disordered region spans residues 1-38 (GDNKPPKKGPPNGCFGHKIDRIGSHSGLGCNKVDDNKG). A disulfide bridge connects residues Cys-14 and Cys-30.

This sequence belongs to the natriuretic peptide family. Expressed by the venom gland.

The protein resides in the secreted. Inhibits platelet aggregation induced by thrombin, collagen and PAF-acether. Human platelet aggregation induced by thrombin is inhibited by synthetic lebetin-1-alpha with (IC(50)=140 nM). In vivo, inhibits collagen-induced thrombocytopenia in rats. Is not toxic upon intravenous injection into mice and rats. Its function is as follows. Inhibits platelet aggregation induced by thrombin, collagen and PAF-acether. Human platelet aggregation induced by thrombin is inhibited by synthetic lebetin-1-beta with (IC(50)=32 nM). In vivo, inhibits collagen-induced thrombocytopenia in rats. Is not toxic upon intravenous injection into mice and rats. Functionally, inhibits platelet aggregation induced by thrombin, collagen and PAF-acether. Human platelet aggregation induced by thrombin is inhibited by synthetic lebetin-1-gamma with (IC(50)=5 nM). In vivo, inhibits collagen-induced thrombocytopenia in rats. Is not toxic upon intravenous injection into mice and rats. In terms of biological role, inhibits platelet aggregation induced by thrombin, collagen and PAF-acether. Human platelet aggregation induced by thrombin is inhibited by synthetic lebetin-1-alpha with (IC(50)=2.5 nM). In vivo, inhibits collagen-induced thrombocytopenia in rats. Is not toxic upon intravenous injection into mice and rats. Inhibits platelet aggregation induced by thrombin, collagen and PAF-acether. Human platelet aggregation induced by thrombin is inhibited by synthetic lebetin-1-alpha with (IC(50)=2.8 nM). In vivo, inhibits collagen-induced thrombocytopenia in rats. Is not toxic upon intravenous injection into mice and rats. This is Lebetin-2-alpha from Macrovipera lebetinus (Levantine viper).